The following is a 280-amino-acid chain: MIAAPTQLAIMPFPNIDPIALSIGPLAIHWYGIAYVAGIMLGWFYARRLARTDRLWPNDTSPISAQHLDDFILWAAGGIVLGGRIGYILFYDMAAVAANPIRAIEIWNGGMSFHGGLIGTTIAMILFARRNGIPVWSMFDIIAAVAPIGLLFGRIANFINGELWGRIADVPWAVVFPTGGPFARHPSQLYEAGLEGLVLVVLLAIAIYVFKALKTPGTVTGIFVCGYALSRIFVEFFREPDAQIGYLAGNWLTMGMVLSTPMFLLGLWAVLRARSATKSA.

4 helical membrane-spanning segments follow: residues 26–46 (LAIH…WFYA), 71–91 (FILW…ILFY), 106–126 (IWNG…AMIL), and 132–152 (GIPV…GLLF). Arginine 154 contacts a 1,2-diacyl-sn-glycero-3-phospho-(1'-sn-glycerol). The next 3 helical transmembrane spans lie at 193-213 (GLEG…FKAL), 217-237 (GTVT…VEFF), and 251-271 (WLTM…WAVL).

The protein belongs to the Lgt family.

It is found in the cell inner membrane. The enzyme catalyses L-cysteinyl-[prolipoprotein] + a 1,2-diacyl-sn-glycero-3-phospho-(1'-sn-glycerol) = an S-1,2-diacyl-sn-glyceryl-L-cysteinyl-[prolipoprotein] + sn-glycerol 1-phosphate + H(+). Its pathway is protein modification; lipoprotein biosynthesis (diacylglyceryl transfer). Functionally, catalyzes the transfer of the diacylglyceryl group from phosphatidylglycerol to the sulfhydryl group of the N-terminal cysteine of a prolipoprotein, the first step in the formation of mature lipoproteins. The sequence is that of Phosphatidylglycerol--prolipoprotein diacylglyceryl transferase from Agrobacterium fabrum (strain C58 / ATCC 33970) (Agrobacterium tumefaciens (strain C58)).